A 254-amino-acid chain; its full sequence is D-aminoacyl-tRNA deacylase (254 aa).

The tract at residues 61–83 (KPTLTVHTPGNLTEDNSHGGNPE) is disordered. Over residues 65–74 (TVHTPGNLTE) the composition is skewed to polar residues.

Belongs to the DtdA deacylase family. Monomer. Requires Zn(2+) as cofactor.

It carries out the reaction a D-aminoacyl-tRNA + H2O = a tRNA + a D-alpha-amino acid + H(+). The enzyme catalyses glycyl-tRNA(Ala) + H2O = tRNA(Ala) + glycine + H(+). Functionally, D-aminoacyl-tRNA deacylase with broad substrate specificity. By recycling D-aminoacyl-tRNA to D-amino acids and free tRNA molecules, this enzyme counteracts the toxicity associated with the formation of D-aminoacyl-tRNA entities in vivo. In Methanococcus maripaludis (strain C7 / ATCC BAA-1331), this protein is D-aminoacyl-tRNA deacylase.